Here is a 346-residue protein sequence, read N- to C-terminus: MQPIRYRTDLTPYNTFGLHAQARAFIALKHADELRDIVRLPEFDRDTVLWLGGGSNILLMQDYDGLVVHMENKGIREIARSDGMVLIEAQAGEIWHDFVLHTVALGLSGLENLSLIPGTVGASPVQNIGAYGVEAKDVIHSVRCFDLDTETFVTLSNADCRFAYRESLFKQEGKGRYVIVSVVFALKTHFVPNLGYGDLAAKVAELSAGREATAKDVSDAVSAIRNSKLPDPKVLGNVGSFFKNPVVSAEKAATLLQRHPDMPRYPQPDGSVKLAAGWLIDQCRLKGFQIGGAAVHDKQALVLVNKNNASANDVRQLAQHIKFTVFARFQVELHAEPNWLPTSFSL.

The FAD-binding PCMH-type domain maps to 18-189; the sequence is LHAQARAFIA…VSVVFALKTH (172 aa). Arg-165 is an active-site residue. Ser-240 acts as the Proton donor in catalysis. The active site involves Glu-336.

This sequence belongs to the MurB family. Requires FAD as cofactor.

The protein resides in the cytoplasm. The catalysed reaction is UDP-N-acetyl-alpha-D-muramate + NADP(+) = UDP-N-acetyl-3-O-(1-carboxyvinyl)-alpha-D-glucosamine + NADPH + H(+). The protein operates within cell wall biogenesis; peptidoglycan biosynthesis. Functionally, cell wall formation. The chain is UDP-N-acetylenolpyruvoylglucosamine reductase from Neisseria gonorrhoeae (strain ATCC 700825 / FA 1090).